A 178-amino-acid chain; its full sequence is Cytochrome b6-f complex iron-sulfur subunit (178 aa).

A helical transmembrane segment spans residues 20 to 42; the sequence is LLTFGSVTGVALGALYPVVNYFI. The Rieske domain maps to 65-161; that stretch reads ASGWLADHKE…VNVENDNVFV (97 aa). Positions 107, 109, 125, and 128 each coordinate [2Fe-2S] cluster. C112 and C127 are joined by a disulfide.

Belongs to the Rieske iron-sulfur protein family. As to quaternary structure, the 4 large subunits of the cytochrome b6-f complex are cytochrome b6, subunit IV (17 kDa polypeptide, PetD), cytochrome f and the Rieske protein, while the 4 small subunits are PetG, PetL, PetM and PetN. The complex functions as a dimer. [2Fe-2S] cluster is required as a cofactor.

It is found in the cellular thylakoid membrane. It catalyses the reaction 2 oxidized [plastocyanin] + a plastoquinol + 2 H(+)(in) = 2 reduced [plastocyanin] + a plastoquinone + 4 H(+)(out). Functionally, component of the cytochrome b6-f complex, which mediates electron transfer between photosystem II (PSII) and photosystem I (PSI), cyclic electron flow around PSI, and state transitions. This Synechococcus sp. (strain RCC307) protein is Cytochrome b6-f complex iron-sulfur subunit.